The sequence spans 135 residues: Mini-ribonuclease 3 (135 aa).

The active site involves aspartate 17.

Belongs to the MrnC RNase family. In terms of assembly, homodimer. The cofactor is Mg(2+).

The protein resides in the cytoplasm. In terms of biological role, involved in correct processing of both the 5' and 3' ends of 23S rRNA precursor. Processes 30S rRNA precursor transcript even in absence of ribonuclease 3 (Rnc); Rnc processes 30S rRNA into smaller rRNA precursors. The polypeptide is Mini-ribonuclease 3 (Bacillus cereus (strain ATCC 14579 / DSM 31 / CCUG 7414 / JCM 2152 / NBRC 15305 / NCIMB 9373 / NCTC 2599 / NRRL B-3711)).